The sequence spans 351 residues: Alcohol dehydrogenase 5 (351 aa).

Zn(2+) is bound by residues C47, H70, C101, C104, C107, C115, and C183. NAD(+)-binding positions include 181-187 (GACGGLG), D205, K210, 272-274 (VGM), and R344.

The protein belongs to the zinc-containing alcohol dehydrogenase family. It depends on Zn(2+) as a cofactor.

The enzyme catalyses a primary alcohol + NAD(+) = an aldehyde + NADH + H(+). The catalysed reaction is a secondary alcohol + NAD(+) = a ketone + NADH + H(+). The polypeptide is Alcohol dehydrogenase 5 (ADH5) (Saccharomyces pastorianus (Lager yeast)).